A 434-amino-acid chain; its full sequence is 4-hydroxy-3-methylbut-2-en-1-yl diphosphate synthase (flavodoxin) (434 aa).

The span at M1–S15 shows a compositional bias: polar residues. The disordered stretch occupies residues M1–F20. Residues C322, C325, C368, and E375 each contribute to the [4Fe-4S] cluster site.

It belongs to the IspG family. It depends on [4Fe-4S] cluster as a cofactor.

It catalyses the reaction (2E)-4-hydroxy-3-methylbut-2-enyl diphosphate + oxidized [flavodoxin] + H2O + 2 H(+) = 2-C-methyl-D-erythritol 2,4-cyclic diphosphate + reduced [flavodoxin]. It functions in the pathway isoprenoid biosynthesis; isopentenyl diphosphate biosynthesis via DXP pathway; isopentenyl diphosphate from 1-deoxy-D-xylulose 5-phosphate: step 5/6. Converts 2C-methyl-D-erythritol 2,4-cyclodiphosphate (ME-2,4cPP) into 1-hydroxy-2-methyl-2-(E)-butenyl 4-diphosphate. This Burkholderia mallei (strain ATCC 23344) protein is 4-hydroxy-3-methylbut-2-en-1-yl diphosphate synthase (flavodoxin).